The primary structure comprises 778 residues: DNA repair protein crb2 (778 aa).

A disordered region spans residues 35–56 (KVNASINPSPPRSNDNSNKEFS). Residue T73 is modified to Phosphothreonine; by ATM. S80 carries the phosphoserine; by ATM modification. Residues 141–245 (VSNSSQILSP…PPAFLPETSE (105 aa)) form an interaction with rad4 region. T187 is modified (phosphothreonine). T215 carries the post-translational modification Phosphothreonine; by cdc2. Residue T235 is modified to Phosphothreonine. The interval 358–493 (SRRSFKNRVL…RRFQGRDLSF (136 aa)) is tudor-like. The tract at residues 370-404 (FKGYPSFYYPATLVAPVHSAVTSSIMYKVQFDDAT) is interaction with dimethylated histone H4. Residues 535-653 (SNQLIFDDCV…RVVDFSPYLL (119 aa)) form the BRCT domain.

In terms of assembly, homodimer. Dimerization is mediated via the BRCT domain. Interacts (via BRCT domain) with rad3. Interacts with rad4 (via BRCT1,2 domains); a single rad4 molecule interacts simultaneously with both Thr-187 phosphorylation sites in a crb2 dimer. Interacts (via Tudor domain) with histone H4K20me2. Interacts (via BRCT dmain) with histone H2AS128ph (gamma-H2A). Interacts with chk1. Interacts with sad1. Phosphorylation of Thr-73 and Ser-80 by rad3/ATM promotes interaction with chk1. Phosphorylation at Thr-187 is dependent on phosphorylation at Thr-215 and Thr-235. Phosphorylation at Thr-215 and Thr-235 may prime the non-canonical Thr-187 site for cdc2/CDK phosphorylation.

Its subcellular location is the nucleus. Essential for cell cycle arrest at the G1 and G2 stages following DNA damage by X-, and UV-irradiation, or inactivation of DNA ligase. Plays a role in the response to DNA damage. Interaction with rad4 via its phosphorylation sites in the N-terminus couples the DNA checkpoint apparatus to chromatin via interaction of its C-terminal BRCT domains with epigenetic modifications on histones H4 and H2A, respectively, in the G1/S phase of the cell cycle, and facilitates recruitment of the checkpoint kinase chk1. The chain is DNA repair protein crb2 from Schizosaccharomyces pombe (strain 972 / ATCC 24843) (Fission yeast).